The following is a 426-amino-acid chain: D-tagatose-1,6-bisphosphate aldolase subunit KbaZ (426 aa).

Belongs to the GatZ/KbaZ family. KbaZ subfamily. Forms a complex with KbaY.

It participates in carbohydrate metabolism; D-tagatose 6-phosphate degradation; D-glyceraldehyde 3-phosphate and glycerone phosphate from D-tagatose 6-phosphate: step 2/2. In terms of biological role, component of the tagatose-1,6-bisphosphate aldolase KbaYZ that is required for full activity and stability of the Y subunit. Could have a chaperone-like function for the proper and stable folding of KbaY. When expressed alone, KbaZ does not show any aldolase activity. This is D-tagatose-1,6-bisphosphate aldolase subunit KbaZ from Escherichia coli O81 (strain ED1a).